Here is a 306-residue protein sequence, read N- to C-terminus: Dihydroorotate dehydrogenase B (NAD(+)), catalytic subunit (306 aa).

Residues Ser-22 and 46–47 (KT) each bind FMN. Residues Lys-46, 70-74 (NSIGL), and Asn-128 contribute to the substrate site. Asn-128 provides a ligand contact to FMN. The Nucleophile role is filled by Cys-131. Lys-164 contacts FMN. Substrate is bound at residue 191–192 (NT). FMN is bound by residues Gly-216, 242-243 (GG), and 264-265 (GS).

Belongs to the dihydroorotate dehydrogenase family. Type 1 subfamily. Heterotetramer of 2 PyrK and 2 PyrD type B subunits. Requires FMN as cofactor.

The protein localises to the cytoplasm. The catalysed reaction is (S)-dihydroorotate + NAD(+) = orotate + NADH + H(+). Its pathway is pyrimidine metabolism; UMP biosynthesis via de novo pathway; orotate from (S)-dihydroorotate (NAD(+) route): step 1/1. In terms of biological role, catalyzes the conversion of dihydroorotate to orotate with NAD(+) as electron acceptor. In Endomicrobium trichonymphae, this protein is Dihydroorotate dehydrogenase B (NAD(+)), catalytic subunit (pyrD).